A 174-amino-acid chain; its full sequence is Large ribosomal subunit protein uL10 (174 aa).

The protein belongs to the universal ribosomal protein uL10 family. As to quaternary structure, part of the ribosomal stalk of the 50S ribosomal subunit. The N-terminus interacts with L11 and the large rRNA to form the base of the stalk. The C-terminus forms an elongated spine to which L12 dimers bind in a sequential fashion forming a multimeric L10(L12)X complex.

Its function is as follows. Forms part of the ribosomal stalk, playing a central role in the interaction of the ribosome with GTP-bound translation factors. The chain is Large ribosomal subunit protein uL10 from Rubrobacter xylanophilus (strain DSM 9941 / JCM 11954 / NBRC 16129 / PRD-1).